The sequence spans 943 residues: Isoleucine--tRNA ligase (943 aa).

A 'HIGH' region motif is present at residues 59-69 (PYANGQIHLGH). Position 577 (E577) interacts with L-isoleucyl-5'-AMP. The 'KMSKS' region motif lies at 618–622 (KMSKS). Residue K621 coordinates ATP. The Zn(2+) site is built by C906, C909, C926, and C929.

This sequence belongs to the class-I aminoacyl-tRNA synthetase family. IleS type 1 subfamily. As to quaternary structure, monomer. Zn(2+) serves as cofactor.

Its subcellular location is the cytoplasm. It carries out the reaction tRNA(Ile) + L-isoleucine + ATP = L-isoleucyl-tRNA(Ile) + AMP + diphosphate. Catalyzes the attachment of isoleucine to tRNA(Ile). As IleRS can inadvertently accommodate and process structurally similar amino acids such as valine, to avoid such errors it has two additional distinct tRNA(Ile)-dependent editing activities. One activity is designated as 'pretransfer' editing and involves the hydrolysis of activated Val-AMP. The other activity is designated 'posttransfer' editing and involves deacylation of mischarged Val-tRNA(Ile). This chain is Isoleucine--tRNA ligase, found in Xylella fastidiosa (strain M12).